The sequence spans 1014 residues: Probable LRR receptor-like serine/threonine-protein kinase At1g07650 (1014 aa).

Residues 1–23 (MIYLHRIYFIIVLFTLIFHGRLG) form the signal peptide. Topologically, residues 24–619 (FSDNNKLHEA…KPPVYYDTKD (596 aa)) are extracellular. N76, N87, and N101 each carry an N-linked (GlcNAc...) asparagine glycan. LRR repeat units follow at residues 89–112 (SCHV…EFSK), 113–137 (LRHL…WASM), 139–160 (LEDL…LTRL), 161–184 (TMLR…IGQL), 186–207 (HLEK…KLGL), 208–234 (LKNL…NWTR), 256–279 (LTSL…PLKN), 280–304 (LESI…IGDL), 305–327 (KKLK…SFEN), 329–352 (KKAD…FVER), and 354–376 (KNVD…DCNR). N165 is a glycosylation site (N-linked (GlcNAc...) asparagine). Residues N210, N220, and N231 are each glycosylated (N-linked (GlcNAc...) asparagine). N-linked (GlcNAc...) asparagine glycosylation is found at N362, N389, N474, N481, and N511. An LRR 12 repeat occupies 516–539 (LHFAEIIFTDDNTLYSLGKRLFDI). A glycan (N-linked (GlcNAc...) asparagine) is linked at N570. The chain crosses the membrane as a helical span at residues 620-640 (IILKVGVPVAAATLLLFIIVG). At 641-1014 (VFWKKRRDKN…DAEEKTGLLD (374 aa)) the chain is on the cytoplasmic side. At T667 the chain carries Phosphothreonine. Positions 678–960 (FDVTRKIGEG…EGKTAMQELL (283 aa)) constitute a Protein kinase domain. ATP-binding positions include 684–692 (IGEGGFGSV) and K706. Y751 carries the phosphotyrosine modification. D805 (proton acceptor) is an active-site residue. Residues S809 and S838 each carry the phosphoserine modification. T839 and T844 each carry phosphothreonine. Phosphotyrosine is present on Y852. S989 is modified (phosphoserine). Polar residues predominate over residues 989–1002 (SFSTSGPRTASANS). Residues 989–1014 (SFSTSGPRTASANSLVDAEEKTGLLD) form a disordered region.

This sequence belongs to the protein kinase superfamily. Ser/Thr protein kinase family.

It is found in the membrane. The enzyme catalyses L-seryl-[protein] + ATP = O-phospho-L-seryl-[protein] + ADP + H(+). It carries out the reaction L-threonyl-[protein] + ATP = O-phospho-L-threonyl-[protein] + ADP + H(+). The protein is Probable LRR receptor-like serine/threonine-protein kinase At1g07650 of Arabidopsis thaliana (Mouse-ear cress).